Reading from the N-terminus, the 428-residue chain is Serine--tRNA ligase (428 aa).

L-serine is bound at residue 234 to 236; it reads TAE. Position 265 to 267 (265 to 267) interacts with ATP; sequence RRE. An L-serine-binding site is contributed by E288. 352 to 355 is a binding site for ATP; it reads EISS. S388 contributes to the L-serine binding site.

The protein belongs to the class-II aminoacyl-tRNA synthetase family. Type-1 seryl-tRNA synthetase subfamily. As to quaternary structure, homodimer. The tRNA molecule binds across the dimer.

Its subcellular location is the cytoplasm. The enzyme catalyses tRNA(Ser) + L-serine + ATP = L-seryl-tRNA(Ser) + AMP + diphosphate + H(+). The catalysed reaction is tRNA(Sec) + L-serine + ATP = L-seryl-tRNA(Sec) + AMP + diphosphate + H(+). It functions in the pathway aminoacyl-tRNA biosynthesis; selenocysteinyl-tRNA(Sec) biosynthesis; L-seryl-tRNA(Sec) from L-serine and tRNA(Sec): step 1/1. Functionally, catalyzes the attachment of serine to tRNA(Ser). Is also able to aminoacylate tRNA(Sec) with serine, to form the misacylated tRNA L-seryl-tRNA(Sec), which will be further converted into selenocysteinyl-tRNA(Sec). The sequence is that of Serine--tRNA ligase from Synechococcus elongatus (strain ATCC 33912 / PCC 7942 / FACHB-805) (Anacystis nidulans R2).